The following is an 883-amino-acid chain: Pre-mRNA-splicing factor syf1 homolog (883 aa).

HAT repeat units follow at residues 13 to 45, 46 to 78, 88 to 120, 122 to 156, 158 to 190, 268 to 303, 368 to 406, 463 to 495, 531 to 565, 570 to 604, 642 to 676, and 678 to 712; these read INFE…HKAK, APNN…TRRK, PMYE…FMTS, CKIT…FVRR, EMPE…EADR, GLFD…FEEL, DKPA…FYEA, KRKI…LEES, NYFE…KFLE, TKLE…LEEE, YGLP…LETK, and GEVD…FEVR. Disordered stretches follow at residues 794–851 and 864–883; these read RGET…DEEG and IPAK…SDGE. Positions 812–834 are enriched in acidic residues; it reads DEIDIGDSDEDDEEEDDDEENEM. Polar residues-rich tracts occupy residues 835–844 and 873–883; these read TNENQASAAV and KPSNQGDSDGE.

This sequence belongs to the crooked-neck family. Component of the NTC(Nineteen)/Prp19 complex composed of at least fand, Prp19,CG9667/ISY1 and Cdc5/CDC5L. Within the complex, interacts with Prp19 and ISY1/CG9667.

It localises to the nucleus. Its function is as follows. Subunit of the NTC(Nineteen)/Prp19 complex, which is part of the spliceosome. The complex participates in spliceosome assembly, its remodeling and is required for efficient spliceosome activation. Essential for efficient pre-mRNA splicing. In embryos, efficient pre-mRNA splicing of zygotic transcripts is essential during dynamic cellular processes that require rapid division and/or dramatic changes in gene expression such as blastoderm cellularization, tracheal branching morphogenesis, Malpighian morphogenesis and epidermal development. Part of its role in promoting embryo tracheal development is also due to specifically splicing bnl transcripts which results in the activation of the BNL-FGF pathway. This chain is Pre-mRNA-splicing factor syf1 homolog, found in Drosophila melanogaster (Fruit fly).